Reading from the N-terminus, the 267-residue chain is Type III pantothenate kinase (267 aa).

D6–K13 serves as a coordination point for ATP. Substrate contacts are provided by residues Y96 and G103–R106. The active-site Proton acceptor is D105. T131 provides a ligand contact to ATP. T181 lines the substrate pocket.

It belongs to the type III pantothenate kinase family. In terms of assembly, homodimer. Requires NH4(+) as cofactor. It depends on K(+) as a cofactor.

It is found in the cytoplasm. The catalysed reaction is (R)-pantothenate + ATP = (R)-4'-phosphopantothenate + ADP + H(+). Its pathway is cofactor biosynthesis; coenzyme A biosynthesis; CoA from (R)-pantothenate: step 1/5. In terms of biological role, catalyzes the phosphorylation of pantothenate (Pan), the first step in CoA biosynthesis. Functionally, activates transcription of the pertussis toxin operon in a BvgAS-dependent manner. May interact with the alpha subunit of RNA polymerase. The chain is Type III pantothenate kinase (coaX) from Bordetella pertussis (strain Tohama I / ATCC BAA-589 / NCTC 13251).